Consider the following 87-residue polypeptide: Retinal rod rhodopsin-sensitive cGMP 3',5'-cyclic phosphodiesterase subunit gamma (87 aa).

At Met-1 the chain carries N-acetylmethionine. A compositionally biased stretch (basic and acidic residues) spans 1–12 (MNLEPPKAEIRS). Positions 1–55 (MNLEPPKAEIRSATRVMGGPVTPRKGPPKFKQRQTRQFKSKPPKKGVQGFGDDIP) are disordered. Positions 26 to 44 (GPPKFKQRQTRQFKSKPPK) are enriched in basic residues.

It belongs to the rod/cone cGMP-PDE gamma subunit family. Oligomer composed of two catalytic chains (alpha and beta), an inhibitory chain (gamma) and the delta chain.

The catalysed reaction is 3',5'-cyclic GMP + H2O = GMP + H(+). Functionally, participates in processes of transmission and amplification of the visual signal. cGMP-PDEs are the effector molecules in G-protein-mediated phototransduction in vertebrate rods and cones. The chain is Retinal rod rhodopsin-sensitive cGMP 3',5'-cyclic phosphodiesterase subunit gamma (PDE6G) from Bos taurus (Bovine).